The sequence spans 31 residues: Cyclotide psybry B (31 aa).

Residues 1–31 (GFNPCGETCWNKPTCHAPGCTCSIANICVRN) constitute a cross-link (cyclopeptide (Gly-Asn)). Cystine bridges form between cysteine 5-cysteine 20, cysteine 9-cysteine 22, and cysteine 15-cysteine 28.

This is a cyclic peptide.

Probably participates in a plant defense mechanism. This is Cyclotide psybry B from Psychotria brachyceras.